Consider the following 1414-residue polypeptide: DNA-directed RNA polymerase subunit beta' (1414 aa).

Zn(2+) contacts are provided by cysteine 70, cysteine 72, cysteine 85, and cysteine 88. Mg(2+) is bound by residues aspartate 460, aspartate 462, and aspartate 464. Residues cysteine 819, cysteine 893, cysteine 900, and cysteine 903 each coordinate Zn(2+). A disordered region spans residues 1391–1414 (AEEAFDFGTPSAPAEEPQQHPAAE). Residues 1400-1414 (PSAPAEEPQQHPAAE) show a composition bias toward low complexity.

The protein belongs to the RNA polymerase beta' chain family. The RNAP catalytic core consists of 2 alpha, 1 beta, 1 beta' and 1 omega subunit. When a sigma factor is associated with the core the holoenzyme is formed, which can initiate transcription. It depends on Mg(2+) as a cofactor. Zn(2+) serves as cofactor.

The catalysed reaction is RNA(n) + a ribonucleoside 5'-triphosphate = RNA(n+1) + diphosphate. DNA-dependent RNA polymerase catalyzes the transcription of DNA into RNA using the four ribonucleoside triphosphates as substrates. This Burkholderia lata (strain ATCC 17760 / DSM 23089 / LMG 22485 / NCIMB 9086 / R18194 / 383) protein is DNA-directed RNA polymerase subunit beta'.